A 102-amino-acid chain; its full sequence is Transposable element activator uncharacterized 12 kDa protein (102 aa).

Residues 24 to 51 (HNHNQNHNHSHNLNPKKKHHRRGQRSAH) are compositionally biased toward basic residues. The tract at residues 24–55 (HNHNQNHNHSHNLNPKKKHHRRGQRSAHRMYG) is disordered.

The polypeptide is Transposable element activator uncharacterized 12 kDa protein (Zea mays (Maize)).